The sequence spans 119 residues: Transcription and mRNA export factor SUS1 (119 aa).

This sequence belongs to the ENY2 family. Component of the nuclear pore complex (NPC)-associated TREX-2 complex (transcription and export complex 2), composed of at least SUS1, SAC3, THP1, SEM1, and CDC31. TREX-2 contains 2 SUS1 chains. The TREX-2 complex interacts with the nucleoporin NUP1. Component of the 1.8 MDa SAGA transcription coactivator-HAT complex. SAGA is built of 5 distinct domains with specialized functions. Within the SAGA complex, SUS1, SGF11, SGF73 and UBP8 form an additional subcomplex of SAGA called the DUB module (deubiquitination module). Interacts directly with THP1, SAC3, SGF11, and with the RNA polymerase II.

Its subcellular location is the nucleus. It localises to the nucleoplasm. It is found in the cytoplasm. The protein resides in the P-body. Functionally, involved in mRNA export coupled transcription activation by association with both the TREX-2 and the SAGA complexes. At the promoters, SAGA is required for recruitment of the basal transcription machinery. It influences RNA polymerase II transcriptional activity through different activities such as TBP interaction and promoter selectivity, interaction with transcription activators, and chromatin modification through histone acetylation and deubiquitination. Within the SAGA complex, participates in a subcomplex required for deubiquitination of H2B and for the maintenance of steady-state H3 methylation levels. The TREX-2 complex functions in docking export-competent ribonucleoprotein particles (mRNPs) to the nuclear entrance of the nuclear pore complex (nuclear basket). TREX-2 participates in mRNA export and accurate chromatin positioning in the nucleus by tethering genes to the nuclear periphery. May also be involved in cytoplasmic mRNA decay by interaction with components of P-bodies. This Candida albicans (strain SC5314 / ATCC MYA-2876) (Yeast) protein is Transcription and mRNA export factor SUS1.